The primary structure comprises 361 residues: Chorismate synthase (361 aa).

Positions 48 and 54 each coordinate NADP(+). Residues 131–133 (RSS), 243–244 (NA), G287, 302–306 (KPTSS), and R328 each bind FMN.

Belongs to the chorismate synthase family. Homotetramer. Requires FMNH2 as cofactor.

The catalysed reaction is 5-O-(1-carboxyvinyl)-3-phosphoshikimate = chorismate + phosphate. The protein operates within metabolic intermediate biosynthesis; chorismate biosynthesis; chorismate from D-erythrose 4-phosphate and phosphoenolpyruvate: step 7/7. Its function is as follows. Catalyzes the anti-1,4-elimination of the C-3 phosphate and the C-6 proR hydrogen from 5-enolpyruvylshikimate-3-phosphate (EPSP) to yield chorismate, which is the branch point compound that serves as the starting substrate for the three terminal pathways of aromatic amino acid biosynthesis. This reaction introduces a second double bond into the aromatic ring system. The sequence is that of Chorismate synthase from Rhodopseudomonas palustris (strain BisA53).